A 330-amino-acid chain; its full sequence is MMEKYHETDADLKDLSGKTIAVIGYGSQGRGQSRNLKDSGLNVIIGIRAGKSRDLAKSDGFETYDVAEAAKKGDVIMILVPDENQAAVYKAEIMPYLTENKCLMFSHGFNIHFGQIVPPANVDVIMVAPKGPGHMVRRTYEEGKGVPALIAIEQDHTGNAKKLALAYAKGIGATRAVVLETTFREETETDLFGEQAVLCGGVTSLIKAGFDTLVDAGYAPEMAYLEVLHEMKLIVDLIYEGGFTKMREAISNTAQYGDITRGPRVIGNESYEAMREILYEIQSGEFAKEWILENMVNRPTFTALTRADEEHLIEEVGSELRAMMPQFKKN.

The KARI N-terminal Rossmann domain maps to 2–181; that stretch reads MEKYHETDAD…GATRAVVLET (180 aa). Residues 25 to 28, arginine 48, serine 52, and 82 to 85 each bind NADP(+); these read YGSQ and DENQ. Residue histidine 107 is part of the active site. An NADP(+)-binding site is contributed by glycine 133. In terms of domain architecture, KARI C-terminal knotted spans 182–327; sequence TFREETETDL…SELRAMMPQF (146 aa). Mg(2+) is bound by residues aspartate 190, glutamate 194, glutamate 226, and glutamate 230. Serine 251 lines the substrate pocket.

Belongs to the ketol-acid reductoisomerase family. Requires Mg(2+) as cofactor.

It carries out the reaction (2R)-2,3-dihydroxy-3-methylbutanoate + NADP(+) = (2S)-2-acetolactate + NADPH + H(+). The catalysed reaction is (2R,3R)-2,3-dihydroxy-3-methylpentanoate + NADP(+) = (S)-2-ethyl-2-hydroxy-3-oxobutanoate + NADPH + H(+). It functions in the pathway amino-acid biosynthesis; L-isoleucine biosynthesis; L-isoleucine from 2-oxobutanoate: step 2/4. The protein operates within amino-acid biosynthesis; L-valine biosynthesis; L-valine from pyruvate: step 2/4. Functionally, involved in the biosynthesis of branched-chain amino acids (BCAA). Catalyzes an alkyl-migration followed by a ketol-acid reduction of (S)-2-acetolactate (S2AL) to yield (R)-2,3-dihydroxy-isovalerate. In the isomerase reaction, S2AL is rearranged via a Mg-dependent methyl migration to produce 3-hydroxy-3-methyl-2-ketobutyrate (HMKB). In the reductase reaction, this 2-ketoacid undergoes a metal-dependent reduction by NADPH to yield (R)-2,3-dihydroxy-isovalerate. This is Ketol-acid reductoisomerase (NADP(+)) from Methanocorpusculum labreanum (strain ATCC 43576 / DSM 4855 / Z).